We begin with the raw amino-acid sequence, 327 residues long: BarH-like 1 homeobox protein (327 aa).

Disordered stretches follow at residues 1–90 (MEGS…AQSR), 112–184 (APYS…ARTA), and 305–327 (GASE…AQPR). A compositionally biased stretch (low complexity) spans 33–54 (RSPLELSPRSESSSDCSSPASP). Positions 79–90 (QPGQLSAPAQSR) are enriched in polar residues. 2 stretches are compositionally biased toward basic and acidic residues: residues 133–143 (AAEDFRDKLDK) and 152–166 (SEYK…EISS). The segment at residues 178-237 (PRKARTAFTDHQLAQLERSFERQKYLSVQDRMELAASLNLTDTQVKTWYQNRRTKWKRQT) is a DNA-binding region (homeobox). Residues 316–327 (LAGVLPRAAQPR) show a composition bias toward low complexity.

Belongs to the BAR homeobox family.

It localises to the nucleus. The protein is BarH-like 1 homeobox protein (BARHL1) of Homo sapiens (Human).